Consider the following 166-residue polypeptide: Large ribosomal subunit protein uL10 (166 aa).

This sequence belongs to the universal ribosomal protein uL10 family. In terms of assembly, part of the ribosomal stalk of the 50S ribosomal subunit. The N-terminus interacts with L11 and the large rRNA to form the base of the stalk. The C-terminus forms an elongated spine to which L12 dimers bind in a sequential fashion forming a multimeric L10(L12)X complex.

Forms part of the ribosomal stalk, playing a central role in the interaction of the ribosome with GTP-bound translation factors. This chain is Large ribosomal subunit protein uL10, found in Bacillus mycoides (strain KBAB4) (Bacillus weihenstephanensis).